A 233-amino-acid chain; its full sequence is 27 kDa hemolymph glycoprotein (233 aa).

The N-terminal stretch at 1-17 (MIWKTLIVAFMATAVLA) is a signal peptide. Asparagine 125 and asparagine 156 each carry an N-linked (GlcNAc...) asparagine glycan.

Belongs to the UPF0408 family. N-glycosylated. Hemolymph.

The protein resides in the secreted. This Manduca sexta (Tobacco hawkmoth) protein is 27 kDa hemolymph glycoprotein.